The following is a 231-amino-acid chain: Platelet-activating factor acetylhydrolase IB subunit alpha1 (231 aa).

Position 2 is an N-acetylserine (serine 2). Serine 2 is subject to Phosphoserine. Active-site residues include serine 47, aspartate 192, and histidine 195.

Belongs to the 'GDSL' lipolytic enzyme family. Platelet-activating factor acetylhydrolase IB beta/gamma subunits subfamily. Forms a catalytic dimer which is either homodimer (alpha1/alpha1 homodimer) or heterodimer with PAFAH1B2 (alpha1/alpha2 heterodimer). Component of the cytosolic (PAF-AH (I)) heterotetrameric enzyme, which is composed of PAFAH1B1 (beta), PAFAH1B2 (alpha2) and PAFAH1B3 (alpha1) subunits. The catalytic activity of the enzyme resides in the alpha1 (PAFAH1B3) and alpha2 (PAFAH1B2) subunits, whereas the beta subunit (PAFAH1B1) has regulatory activity. Trimer formation is not essential for the catalytic activity. Interacts with VLDLR; this interaction may modulate the Reelin pathway.

The protein localises to the cytoplasm. The enzyme catalyses a 1-O-alkyl-2-acetyl-sn-glycero-3-phosphocholine + H2O = a 1-O-alkyl-sn-glycero-3-phosphocholine + acetate + H(+). The catalysed reaction is 1-O-hexadecyl-2-acetyl-sn-glycero-3-phosphocholine + H2O = 1-O-hexadecyl-sn-glycero-3-phosphocholine + acetate + H(+). It carries out the reaction 1-O-hexadecyl-2-acetyl-sn-glycero-3-phosphate + H2O = 1-O-hexadecyl-sn-glycero-3-phosphate + acetate + H(+). Beta subunit (PAFAH1B1) inhibits the acetylhydrolase activity of the alpha1/alpha1 catalytic homodimer. Functionally, alpha1 catalytic subunit of the cytosolic type I platelet-activating factor (PAF) acetylhydrolase (PAF-AH (I)) heterotetrameric enzyme that catalyzes the hydrolyze of the acetyl group at the sn-2 position of PAF and its analogs and modulates the action of PAF. The activity and substrate specificity of PAF-AH (I) are affected by its subunit composition. Both alpha1/alpha1 homodimer (PAFAH1B3/PAFAH1B3 homodimer) and alpha1/alpha2 heterodimer(PAFAH1B3/PAFAH1B2 heterodimer) hydrolyze 1-O-alkyl-2-acetyl-sn-glycero-3-phosphoric acid (AAGPA) more efficiently than PAF, but they have little hydrolytic activity towards 1-O-alkyl-2-acetyl-sn-glycero-3-phosphorylethanolamine (AAGPE). Plays an important role during the development of brain. The sequence is that of Platelet-activating factor acetylhydrolase IB subunit alpha1 from Pongo abelii (Sumatran orangutan).